A 218-amino-acid chain; its full sequence is Redox-sensing transcriptional repressor Rex (218 aa).

A DNA-binding region (H-T-H motif) is located at residues leucine 18–phenylalanine 57. An NAD(+)-binding site is contributed by glycine 92–glycine 97.

It belongs to the transcriptional regulatory Rex family. As to quaternary structure, homodimer.

It localises to the cytoplasm. Functionally, modulates transcription in response to changes in cellular NADH/NAD(+) redox state. The sequence is that of Redox-sensing transcriptional repressor Rex from Exiguobacterium sp. (strain ATCC BAA-1283 / AT1b).